We begin with the raw amino-acid sequence, 289 residues long: Shikimate kinase (289 aa).

84 to 94 (PVASGLSSSSA) is an ATP binding site.

Belongs to the GHMP kinase family. Archaeal shikimate kinase subfamily.

The protein resides in the cytoplasm. It catalyses the reaction shikimate + ATP = 3-phosphoshikimate + ADP + H(+). Its pathway is metabolic intermediate biosynthesis; chorismate biosynthesis; chorismate from D-erythrose 4-phosphate and phosphoenolpyruvate: step 5/7. In Methanothermobacter thermautotrophicus (strain ATCC 29096 / DSM 1053 / JCM 10044 / NBRC 100330 / Delta H) (Methanobacterium thermoautotrophicum), this protein is Shikimate kinase (aroK).